Here is a 316-residue protein sequence, read N- to C-terminus: Ribosomal RNA small subunit methyltransferase H (316 aa).

Residues 32–34, aspartate 52, phenylalanine 79, aspartate 106, and glutamine 113 each bind S-adenosyl-L-methionine; that span reads AGH.

It belongs to the methyltransferase superfamily. RsmH family.

The protein resides in the cytoplasm. The enzyme catalyses cytidine(1402) in 16S rRNA + S-adenosyl-L-methionine = N(4)-methylcytidine(1402) in 16S rRNA + S-adenosyl-L-homocysteine + H(+). Its function is as follows. Specifically methylates the N4 position of cytidine in position 1402 (C1402) of 16S rRNA. The chain is Ribosomal RNA small subunit methyltransferase H from Paenibacillus sp. (strain JDR-2).